The sequence spans 484 residues: ATP synthase subunit beta (484 aa).

Position 162–169 (162–169) interacts with ATP; it reads GGAGVGKT.

This sequence belongs to the ATPase alpha/beta chains family. F-type ATPases have 2 components, CF(1) - the catalytic core - and CF(0) - the membrane proton channel. CF(1) has five subunits: alpha(3), beta(3), gamma(1), delta(1), epsilon(1). CF(0) has three main subunits: a(1), b(2) and c(9-12). The alpha and beta chains form an alternating ring which encloses part of the gamma chain. CF(1) is attached to CF(0) by a central stalk formed by the gamma and epsilon chains, while a peripheral stalk is formed by the delta and b chains.

It localises to the cell inner membrane. It catalyses the reaction ATP + H2O + 4 H(+)(in) = ADP + phosphate + 5 H(+)(out). Its function is as follows. Produces ATP from ADP in the presence of a proton gradient across the membrane. The catalytic sites are hosted primarily by the beta subunits. The protein is ATP synthase subunit beta of Agrobacterium fabrum (strain C58 / ATCC 33970) (Agrobacterium tumefaciens (strain C58)).